A 223-amino-acid polypeptide reads, in one-letter code: Pleckstrin homology domain-containing family B member 1 (223 aa).

The region spanning 2 to 109 (ALVRGGWLWR…WKTALMEANS (108 aa)) is the PH domain.

Homodimer. Interacts (via PH domain) with MYO1C. Interacts (via PH domain) with MYO7A. Binds transducins. As to expression, highly expressed in photoreceptor cells, oligodendrocytes and throughout the myelinated parts of the central nervous system. Detected in brain, liver, kidney, spleen and trachea.

Its subcellular location is the membrane. It is found in the cytoplasm. The chain is Pleckstrin homology domain-containing family B member 1 (Plekhb1) from Rattus norvegicus (Rat).